Consider the following 184-residue polypeptide: uncharacterized protein (184 aa).

Belongs to the eIF-2B alpha/beta/delta subunits family.

This is an uncharacterized protein from Rhodospirillum rubrum.